A 266-amino-acid chain; its full sequence is MDTLKKLKFEANGIIGVLLDYSREPVLTNIIDQFRTSLESNDIELIRYSLEQLKTWYARNRNEIYKNEFVFNEFEHHETENKIKKFLDELPVVDETEKSSITHFSSDQNRELEKKIFISHSSKDKIVCNAFVELLEDIGVSSEDIIYTSSPYHGIPGDEDIFEYLKKHLFKGAYVFYMLSDNYYDSVYCLNEMGATWVNSNNCSTFILPGFKGEIKGVIDKNKKAFSLEEPIDLFNLKEKILRMYDLTLEDKKWERIKAKFNTKLK.

In terms of domain architecture, TIR spans 112–261 (LEKKIFISHS…KKWERIKAKF (150 aa)). Glu192 is an active-site residue.

It carries out the reaction NAD(+) + H2O = ADP-D-ribose + nicotinamide + H(+). This is an uncharacterized protein from Bacillus subtilis (strain 168).